A 368-amino-acid polypeptide reads, in one-letter code: Protein-glutamate methylesterase/protein-glutamine glutaminase 1 (368 aa).

The region spanning 4–121 is the Response regulatory domain; the sequence is KVLVVDDSGF…SRNPDKVRQL (118 aa). 4-aspartylphosphate is present on aspartate 55. The disordered stretch occupies residues 138-176; sequence SLPPLPSATSSSHAPASSSSVGASARVGAGASPAPASTS. A compositionally biased stretch (low complexity) spans 144–176; sequence SATSSSHAPASSSSVGASARVGAGASPAPASTS. The CheB-type methylesterase domain occupies 172 to 368; sequence PASTSAAPKR…IGRHLVEACQ (197 aa). Catalysis depends on residues serine 192, histidine 219, and aspartate 312.

Belongs to the CheB family. Phosphorylated by CheA. Phosphorylation of the N-terminal regulatory domain activates the methylesterase activity.

It localises to the cytoplasm. It catalyses the reaction [protein]-L-glutamate 5-O-methyl ester + H2O = L-glutamyl-[protein] + methanol + H(+). It carries out the reaction L-glutaminyl-[protein] + H2O = L-glutamyl-[protein] + NH4(+). Involved in chemotaxis. Part of a chemotaxis signal transduction system that modulates chemotaxis in response to various stimuli. Catalyzes the demethylation of specific methylglutamate residues introduced into the chemoreceptors (methyl-accepting chemotaxis proteins or MCP) by CheR. Also mediates the irreversible deamidation of specific glutamine residues to glutamic acid. This Pseudomonas aeruginosa (strain ATCC 15692 / DSM 22644 / CIP 104116 / JCM 14847 / LMG 12228 / 1C / PRS 101 / PAO1) protein is Protein-glutamate methylesterase/protein-glutamine glutaminase 1.